The primary structure comprises 251 residues: Zinc import ATP-binding protein ZnuC (251 aa).

Positions 5-220 constitute an ABC transporter domain; it reads VSLENVSVSF…PEFISMFGPR (216 aa). 37 to 44 is an ATP binding site; that stretch reads GPNGAGKS.

This sequence belongs to the ABC transporter superfamily. Zinc importer (TC 3.A.1.15.5) family. The complex is composed of two ATP-binding proteins (ZnuC), two transmembrane proteins (ZnuB) and a solute-binding protein (ZnuA).

The protein localises to the cell inner membrane. The enzyme catalyses Zn(2+)(out) + ATP(in) + H2O(in) = Zn(2+)(in) + ADP(in) + phosphate(in) + H(+)(in). Part of the ABC transporter complex ZnuABC involved in zinc import. Responsible for energy coupling to the transport system. The sequence is that of Zinc import ATP-binding protein ZnuC from Salmonella typhi.